The following is a 278-amino-acid chain: Shikimate dehydrogenase (NADP(+)) (278 aa).

Shikimate is bound by residues serine 19–serine 21 and threonine 66. The Proton acceptor role is filled by lysine 70. Asparagine 91 and aspartate 106 together coordinate shikimate. Residues glycine 129–alanine 133 and phenylalanine 221 each bind NADP(+). Residue tyrosine 223 participates in shikimate binding. Residue glycine 242 participates in NADP(+) binding.

Belongs to the shikimate dehydrogenase family. As to quaternary structure, homodimer.

It carries out the reaction shikimate + NADP(+) = 3-dehydroshikimate + NADPH + H(+). Its pathway is metabolic intermediate biosynthesis; chorismate biosynthesis; chorismate from D-erythrose 4-phosphate and phosphoenolpyruvate: step 4/7. Involved in the biosynthesis of the chorismate, which leads to the biosynthesis of aromatic amino acids. Catalyzes the reversible NADPH linked reduction of 3-dehydroshikimate (DHSA) to yield shikimate (SA). In Anaeromyxobacter dehalogenans (strain 2CP-C), this protein is Shikimate dehydrogenase (NADP(+)).